A 208-amino-acid polypeptide reads, in one-letter code: Large ribosomal subunit protein uL3 (208 aa).

The tract at residues 116–148 (GFQGVIKRHGQSRGPMAHGSRYHRRPGSMGPVA) is disordered.

The protein belongs to the universal ribosomal protein uL3 family. As to quaternary structure, part of the 50S ribosomal subunit. Forms a cluster with proteins L14 and L19.

One of the primary rRNA binding proteins, it binds directly near the 3'-end of the 23S rRNA, where it nucleates assembly of the 50S subunit. The sequence is that of Large ribosomal subunit protein uL3 from Streptococcus agalactiae serotype Ia (strain ATCC 27591 / A909 / CDC SS700).